A 573-amino-acid polypeptide reads, in one-letter code: Putative ABC transporter ATP-binding protein LJ_1704 (573 aa).

2 ABC transporter domains span residues 6 to 247 and 303 to 536; these read IEFK…GVRE and LKLD…ASLK. ATP is bound by residues 40–47 and 337–344; these read GPSGSGKS and GQNGAGKT.

This sequence belongs to the ABC transporter superfamily.

Its subcellular location is the cell membrane. Its function is as follows. Probably part of an ABC transporter complex. Responsible for energy coupling to the transport system. The protein is Putative ABC transporter ATP-binding protein LJ_1704 of Lactobacillus johnsonii (strain CNCM I-12250 / La1 / NCC 533).